The following is a 137-amino-acid chain: Putative protein YjhV (137 aa).

Residues Met-1 to Thr-16 show a composition bias toward polar residues. A disordered region spans residues Met-1–Arg-20.

The protein is Putative protein YjhV (yjhV) of Escherichia coli (strain K12).